We begin with the raw amino-acid sequence, 478 residues long: Probable glycine dehydrogenase (decarboxylating) subunit 2 (478 aa).

Lys264 is modified (N6-(pyridoxal phosphate)lysine).

The protein belongs to the GcvP family. C-terminal subunit subfamily. The glycine cleavage system is composed of four proteins: P, T, L and H. In this organism, the P 'protein' is a heterodimer of two subunits. Requires pyridoxal 5'-phosphate as cofactor.

The enzyme catalyses N(6)-[(R)-lipoyl]-L-lysyl-[glycine-cleavage complex H protein] + glycine + H(+) = N(6)-[(R)-S(8)-aminomethyldihydrolipoyl]-L-lysyl-[glycine-cleavage complex H protein] + CO2. Its function is as follows. The glycine cleavage system catalyzes the degradation of glycine. The P protein binds the alpha-amino group of glycine through its pyridoxal phosphate cofactor; CO(2) is released and the remaining methylamine moiety is then transferred to the lipoamide cofactor of the H protein. The polypeptide is Probable glycine dehydrogenase (decarboxylating) subunit 2 (Endomicrobium trichonymphae).